Consider the following 40-residue polypeptide: Omega-conotoxin RsXXVIA (40 aa).

In terms of processing, contains 4 disulfide bonds. As to expression, expressed by the venom duct.

The protein resides in the secreted. In terms of biological role, omega-conotoxins act at presynaptic membranes, they bind and block voltage-gated calcium channels (Cav). This toxin inhibits rat Cav2.2/CACNA1B calcium channels in a dose-dependent manner (EC(50)=2.8 uM), whose effect is partially reversed after washing. In vivo, when injected into mice, it shows both an analgesic effect in acute thermal pain at 30 and 45 minutes post-injection and an anti-nociceptive effect in a formalin chronic pain test. The chain is Omega-conotoxin RsXXVIA from Conus regularis (Regular cone).